Consider the following 491-residue polypeptide: Cobyric acid synthase (491 aa).

Residues 258 to 445 (ALKVAVPVLG…MHGLFGADAF (188 aa)) form the GATase cobBQ-type domain. Cys-340 functions as the Nucleophile in the catalytic mechanism. His-437 is a catalytic residue.

It belongs to the CobB/CobQ family. CobQ subfamily.

Its pathway is cofactor biosynthesis; adenosylcobalamin biosynthesis. In terms of biological role, catalyzes amidations at positions B, D, E, and G on adenosylcobyrinic A,C-diamide. NH(2) groups are provided by glutamine, and one molecule of ATP is hydrogenolyzed for each amidation. The sequence is that of Cobyric acid synthase from Mesorhizobium japonicum (strain LMG 29417 / CECT 9101 / MAFF 303099) (Mesorhizobium loti (strain MAFF 303099)).